The chain runs to 626 residues: Grainyhead-like protein 3 homolog (626 aa).

The interval 30-95 (EAWKTYLENP…QGKRYYHGME (66 aa)) is transcription activation. Positions 226–460 (SLKSDFEYTL…DLETPPVLFI (235 aa)) constitute a Grh/CP2 DB domain.

It belongs to the grh/CP2 family. Grainyhead subfamily. As to quaternary structure, homodimer, also forms heterodimers with GRHL1 and GRHL2. Interacts with LMO4. In terms of tissue distribution, expressed in brain, colon, pancreas, placenta and kidney. Isoform 1 is expressed in lung and tonsil. Isoform 2 is prostate-specific.

It localises to the nucleus. Transcription factor playing important roles in primary neurulation and in the differentiation of stratified epithelia of both ectodermal and endodermal origin. Binds directly to the consensus DNA sequence 5'-AACCGGTT-3' acting as an activator and repressor on distinct target genes. xhibits functional redundancy with GRHL2 in epidermal morphogenetic events and epidermal wound repair. Exhibits functional redundancy with GRHL2 in epidermal morphogenetic events and epidermal wound repair but is essential to form the epidermal barrier with TGM3 as critical direct target gene among others. Despite being dispensable during normal epidermal homeostasis in the adulthood, is again required for barrier repair after immune-mediated epidermal damage, regulates distinct gene batteries in embryonic epidermal differentiation and adult epidermal barrier reformation after injury. Plays unique and cooperative roles with GRHL2 in establishing distinct zones of primary neurulation. Essential for spinal closure, functions cooperatively with GRHL2 in closure 2 (forebrain/midbrain boundary) and posterior neuropore closure. Also required for proper development of the oral periderm. No genetic interaction with GRHL3, no functional cooperativity due to diverse target gene selectivity. This is Grainyhead-like protein 3 homolog from Homo sapiens (Human).